The primary structure comprises 560 residues: Light-independent protochlorophyllide reductase subunit N (560 aa).

[4Fe-4S] cluster contacts are provided by Cys-24, Cys-49, and Cys-109. Residues Asn-173–Ser-182 are compositionally biased toward low complexity. The disordered stretch occupies residues Asn-173–Lys-210. The segment covering Phe-196–Phe-206 has biased composition (polar residues).

The protein belongs to the BchN/ChlN family. In terms of assembly, protochlorophyllide reductase is composed of three subunits; ChlL, ChlN and ChlB. Forms a heterotetramer of two ChlB and two ChlN subunits. It depends on [4Fe-4S] cluster as a cofactor.

The protein resides in the plastid. It localises to the chloroplast. The enzyme catalyses chlorophyllide a + oxidized 2[4Fe-4S]-[ferredoxin] + 2 ADP + 2 phosphate = protochlorophyllide a + reduced 2[4Fe-4S]-[ferredoxin] + 2 ATP + 2 H2O. It functions in the pathway porphyrin-containing compound metabolism; chlorophyll biosynthesis (light-independent). Its function is as follows. Component of the dark-operative protochlorophyllide reductase (DPOR) that uses Mg-ATP and reduced ferredoxin to reduce ring D of protochlorophyllide (Pchlide) to form chlorophyllide a (Chlide). This reaction is light-independent. The NB-protein (ChlN-ChlB) is the catalytic component of the complex. The protein is Light-independent protochlorophyllide reductase subunit N of Tetradesmus obliquus (Green alga).